Reading from the N-terminus, the 324-residue chain is Dehydrogenase/reductase SDR family member 7C-A (324 aa).

The first 17 residues, 1 to 17 (MAVPSVMVLPLLIVVFA), serve as a signal peptide directing secretion. Residue 41 to 65 (VITDAVSGMGSECARLFHAGGARLV) coordinates NAD(+). Ser-178 serves as a coordination point for substrate. Tyr-191 functions as the Proton acceptor in the catalytic mechanism.

This sequence belongs to the short-chain dehydrogenases/reductases (SDR) family.

Its subcellular location is the secreted. Putative oxidoreductase. This is Dehydrogenase/reductase SDR family member 7C-A (dhrs7ca) from Danio rerio (Zebrafish).